A 643-amino-acid chain; its full sequence is 1-deoxy-D-xylulose-5-phosphate synthase (643 aa).

Thiamine diphosphate contacts are provided by residues histidine 78 and 119 to 121 (AHS). Residue aspartate 150 participates in Mg(2+) binding. Thiamine diphosphate-binding positions include 151–152 (GS), asparagine 179, tyrosine 288, and glutamate 370. Residue asparagine 179 participates in Mg(2+) binding.

Belongs to the transketolase family. DXPS subfamily. As to quaternary structure, homodimer. It depends on Mg(2+) as a cofactor. Requires thiamine diphosphate as cofactor.

The enzyme catalyses D-glyceraldehyde 3-phosphate + pyruvate + H(+) = 1-deoxy-D-xylulose 5-phosphate + CO2. The protein operates within metabolic intermediate biosynthesis; 1-deoxy-D-xylulose 5-phosphate biosynthesis; 1-deoxy-D-xylulose 5-phosphate from D-glyceraldehyde 3-phosphate and pyruvate: step 1/1. Functionally, catalyzes the acyloin condensation reaction between C atoms 2 and 3 of pyruvate and glyceraldehyde 3-phosphate to yield 1-deoxy-D-xylulose-5-phosphate (DXP). The protein is 1-deoxy-D-xylulose-5-phosphate synthase of Brucella suis (strain ATCC 23445 / NCTC 10510).